Here is a 147-residue protein sequence, read N- to C-terminus: Nucleoside diphosphate kinase (147 aa).

The ATP site is built by K9, F57, R85, T91, R102, and N112. H115 serves as the catalytic Pros-phosphohistidine intermediate.

It belongs to the NDK family. As to quaternary structure, homotetramer. It depends on Mg(2+) as a cofactor.

The protein localises to the cytoplasm. It catalyses the reaction a 2'-deoxyribonucleoside 5'-diphosphate + ATP = a 2'-deoxyribonucleoside 5'-triphosphate + ADP. The catalysed reaction is a ribonucleoside 5'-diphosphate + ATP = a ribonucleoside 5'-triphosphate + ADP. In terms of biological role, major role in the synthesis of nucleoside triphosphates other than ATP. The ATP gamma phosphate is transferred to the NDP beta phosphate via a ping-pong mechanism, using a phosphorylated active-site intermediate. This Thermosipho melanesiensis (strain DSM 12029 / CIP 104789 / BI429) protein is Nucleoside diphosphate kinase.